The sequence spans 439 residues: Proline--tRNA ligase (439 aa).

This sequence belongs to the class-II aminoacyl-tRNA synthetase family. ProS type 2 subfamily. Homodimer.

It localises to the cytoplasm. The catalysed reaction is tRNA(Pro) + L-proline + ATP = L-prolyl-tRNA(Pro) + AMP + diphosphate. Functionally, catalyzes the attachment of proline to tRNA(Pro) in a two-step reaction: proline is first activated by ATP to form Pro-AMP and then transferred to the acceptor end of tRNA(Pro). The polypeptide is Proline--tRNA ligase (Rhodopseudomonas palustris (strain BisA53)).